Here is a 206-residue protein sequence, read N- to C-terminus: Sperm acrosome developmental regulator (206 aa).

Residues 180-206 (RRHHVRCHAAPRPNPAQSLKLDAQSPL) are disordered.

As to expression, expressed in sperm (at protein level).

The protein resides in the cytoplasmic vesicle. Its subcellular location is the secretory vesicle. It is found in the acrosome. Functionally, may play a role in acrosome formation and nucleus shaping during spermiogenesis. This chain is Sperm acrosome developmental regulator, found in Homo sapiens (Human).